The primary structure comprises 751 residues: Photosystem I P700 chlorophyll a apoprotein A1 (751 aa).

8 helical membrane passes run 73-96 (VFSA…FHGA), 159-182 (LYTT…FHYH), 198-222 (LNHH…HVSL), 294-312 (TAHH…GHMY), 349-372 (WHAQ…HHMY), 388-414 (LSLF…IFMV), 436-458 (AIIS…LYIH), and 533-551 (FLVH…LILL). [4Fe-4S] cluster contacts are provided by cysteine 575 and cysteine 584. 2 helical membrane-spanning segments follow: residues 591 to 612 (HVFL…HFSW) and 665 to 687 (LSAY…MFLF). Histidine 676 lines the chlorophyll a' pocket. Chlorophyll a contacts are provided by methionine 684 and tyrosine 692. Tryptophan 693 serves as a coordination point for phylloquinone. The helical transmembrane segment at 725–745 (AVGVAHYLLGGIATTWSFFLA) threads the bilayer.

This sequence belongs to the PsaA/PsaB family. In terms of assembly, the PsaA/B heterodimer binds the P700 chlorophyll special pair and subsequent electron acceptors. PSI consists of a core antenna complex that captures photons, and an electron transfer chain that converts photonic excitation into a charge separation. The eukaryotic PSI reaction center is composed of at least 11 subunits. P700 is a chlorophyll a/chlorophyll a' dimer, A0 is one or more chlorophyll a, A1 is one or both phylloquinones and FX is a shared 4Fe-4S iron-sulfur center. is required as a cofactor.

The protein localises to the plastid. Its subcellular location is the chloroplast thylakoid membrane. The enzyme catalyses reduced [plastocyanin] + hnu + oxidized [2Fe-2S]-[ferredoxin] = oxidized [plastocyanin] + reduced [2Fe-2S]-[ferredoxin]. Its function is as follows. PsaA and PsaB bind P700, the primary electron donor of photosystem I (PSI), as well as the electron acceptors A0, A1 and FX. PSI is a plastocyanin/cytochrome c6-ferredoxin oxidoreductase, converting photonic excitation into a charge separation, which transfers an electron from the donor P700 chlorophyll pair to the spectroscopically characterized acceptors A0, A1, FX, FA and FB in turn. Oxidized P700 is reduced on the lumenal side of the thylakoid membrane by plastocyanin or cytochrome c6. In Tetradesmus obliquus (Green alga), this protein is Photosystem I P700 chlorophyll a apoprotein A1.